We begin with the raw amino-acid sequence, 365 residues long: Chorismate synthase (365 aa).

NADP(+) contacts are provided by arginine 48 and arginine 54. FMN contacts are provided by residues 131–133, 243–244, glycine 288, 303–307, and arginine 329; these read RSS, NA, and KPTSS.

It belongs to the chorismate synthase family. As to quaternary structure, homotetramer. It depends on FMNH2 as a cofactor.

It carries out the reaction 5-O-(1-carboxyvinyl)-3-phosphoshikimate = chorismate + phosphate. It functions in the pathway metabolic intermediate biosynthesis; chorismate biosynthesis; chorismate from D-erythrose 4-phosphate and phosphoenolpyruvate: step 7/7. Functionally, catalyzes the anti-1,4-elimination of the C-3 phosphate and the C-6 proR hydrogen from 5-enolpyruvylshikimate-3-phosphate (EPSP) to yield chorismate, which is the branch point compound that serves as the starting substrate for the three terminal pathways of aromatic amino acid biosynthesis. This reaction introduces a second double bond into the aromatic ring system. The polypeptide is Chorismate synthase (Sinorhizobium medicae (strain WSM419) (Ensifer medicae)).